Reading from the N-terminus, the 535-residue chain is Pre-mRNA-splicing factor SLU7-A (535 aa).

The segment at 21–44 is disordered; the sequence is EEARKAGLAPAEVDEDGKEINPHI. The segment at 96–109 adopts a CCHC-type zinc-finger fold; sequence CQNCGAMTHTAKAC. Positions 176–190 are enriched in basic and acidic residues; sequence LKKLEEKNNNEKGDD. Disordered regions lie at residues 176 to 204 and 489 to 508; these read LKKLEEKNNNEKGDDANSDGEEDEDDLRV and EDLSRREEKDERKRKYNVKY. The span at 191–203 shows a compositional bias: acidic residues; the sequence is ANSDGEEDEDDLR. Position 193 is a phosphoserine (Ser-193). Positions 486 to 493 match the Nuclear localization signal motif; it reads LKKEDLSR. Basic and acidic residues predominate over residues 489-501; sequence EDLSRREEKDERK.

The protein belongs to the SLU7 family. As to expression, mainly expressed in tissues undergoing cell proliferation, particularly in lateral organs.

The protein localises to the nucleus. Functionally, participates in the second catalytic step of pre-mRNA splicing, when the free hydroxyl group of exon I attacks the 3'-splice site to generate spliced mRNA and the excised lariat intron. Together with SMP2, involved in the timing of cell cycle arrest during leaf development, in a STRUWWELPETER (SWP) dependent manner; promotes cell proliferation in developing organs. This chain is Pre-mRNA-splicing factor SLU7-A, found in Arabidopsis thaliana (Mouse-ear cress).